The following is a 479-amino-acid chain: NAC domain-containing protein 45 (479 aa).

The NAC domain occupies 6 to 157 (LPPGFRFHPT…AYALCRVFKK (152 aa)). A DNA-binding region spans residues 105–163 (IGTKKTLVYYRGRAPHGIRTGWVMHEYRLDETECEPSAYGMQDAYALCRVFKKIVIEAK).

In terms of tissue distribution, expressed in a few sieve element cells before enucleation and in phloem-pole pericycle cells.

Its subcellular location is the nucleus. Its function is as follows. Transcription factor directing sieve element enucleation and cytosol degradation. Not required for formation of lytic vacuoles. Regulates, with NAC086, the transcription of NEN1, NEN2, NEN3, NEN4, RTM1, RTM2, UBP16, PLDZETA, ABCB10 and At1g26450. This Arabidopsis thaliana (Mouse-ear cress) protein is NAC domain-containing protein 45.